Reading from the N-terminus, the 290-residue chain is Outer dense fiber protein 4 (290 aa).

A Phosphoserine modification is found at Ser-28. 4 helical membrane-spanning segments follow: residues 44–64 (AQVVASEFSLVAFLLLLVMVF), 125–145 (PVFGVAKISFTLAIGLGFVLT), 164–184 (LIGIILSFCEVTLIFLTLLLF), and 201–221 (IGWSYFIGWLVLILYFTCGIL). The disordered stretch occupies residues 247–290 (GPESLVSPSQTPSSQENSQESPKDDQKPSSPDKVVSPPQPDTTG). Residues 252-266 (VSPSQTPSSQENSQE) show a composition bias toward polar residues.

As to expression, expressed in testis.

It localises to the membrane. Functionally, component of the outer dense fibers (ODF) of spermatozoa which could be involved in sperm tail structure, sperm movement and general organization of cellular cytoskeleton. The chain is Outer dense fiber protein 4 (Odf4) from Mus musculus (Mouse).